Reading from the N-terminus, the 657-residue chain is MTQLAIGKPAPLGAHYDGQGVNFTLFSAHAERVELCIFDANGQEHRYDLPGHSGDIWHGYLPDARPGLRYGYRVHGPWQPAEGHRFNPAKLLIDPCARQIDGEFKDNPLLHAGHNEPDYRDNAAIAPKCVVVVDHYDWEDDAPPRTPWGSTIIYEAHVKGLTYLHPEIPVEIRGTYKALGHPVMINYLKQLGITALELLPVAQFASEPRLQRMGLSNYWGYNPVAMFALHPAYACSPETALDEFRDAIKALHKAGIEVILDIVLNHSAELDLDGPLFSLRGIDNRSYYWIREDGDYHNWTGCGNTLNLSHPAVVDYASACLRYWVETCHVDGFRFDLAAVMGRTPEFRQDAPLFTAIQNCPVLSQVKLIAEPWDIAPGGYQVGNFPPLFAEWNDHFRDAARRFWLHYDLPLGAFAGRFAASSDVFKRNGRLPSAAINLVTAHDGFTLRDCVCFNHKHNEANGEENRDGTNNNYSNNHGKEGLGGTLDLVERRRDSIHALLTTLLLSQGTPMLLAGDEHGHSQHGNNNAYCQDNQLTWLDWSQASSGLTAFTAALIHLRKRIPALVENRWWEEGDGNVRWLNRYAQPLSTDEWQNGPKQLQILLSDRFLIAINATLEVTEIVLPAGEWHAIPPFAGEDNPVITAVWQGPAHGLCVFQR.

The active-site Nucleophile is the Asp-336. Glu-371 acts as the Proton donor in catalysis. Positions Ala-460 to Lys-479 are disordered.

It belongs to the glycosyl hydrolase 13 family.

It carries out the reaction Hydrolysis of (1-&gt;6)-alpha-D-glucosidic linkages to branches with degrees of polymerization of three or four glucose residues in limit dextrin.. It functions in the pathway glycan degradation; glycogen degradation. Functionally, removes maltotriose and maltotetraose chains that are attached by 1,6-alpha-linkage to the limit dextrin main chain, generating a debranched limit dextrin. In Escherichia coli O17:K52:H18 (strain UMN026 / ExPEC), this protein is Glycogen debranching enzyme.